A 435-amino-acid chain; its full sequence is Serine--tRNA ligase (435 aa).

233 to 235 (TAE) lines the L-serine pocket. 264 to 266 (RAE) lines the ATP pocket. An L-serine-binding site is contributed by Glu287. Residue 351 to 354 (EISS) participates in ATP binding. Residue Ser386 participates in L-serine binding.

The protein belongs to the class-II aminoacyl-tRNA synthetase family. Type-1 seryl-tRNA synthetase subfamily. Homodimer. The tRNA molecule binds across the dimer.

It is found in the cytoplasm. The catalysed reaction is tRNA(Ser) + L-serine + ATP = L-seryl-tRNA(Ser) + AMP + diphosphate + H(+). It carries out the reaction tRNA(Sec) + L-serine + ATP = L-seryl-tRNA(Sec) + AMP + diphosphate + H(+). It functions in the pathway aminoacyl-tRNA biosynthesis; selenocysteinyl-tRNA(Sec) biosynthesis; L-seryl-tRNA(Sec) from L-serine and tRNA(Sec): step 1/1. Its function is as follows. Catalyzes the attachment of serine to tRNA(Ser). Is also able to aminoacylate tRNA(Sec) with serine, to form the misacylated tRNA L-seryl-tRNA(Sec), which will be further converted into selenocysteinyl-tRNA(Sec). This is Serine--tRNA ligase from Anaeromyxobacter sp. (strain K).